A 499-amino-acid chain; its full sequence is ATP synthase subunit beta, chloroplastic (499 aa).

170–177 (GGAGVGKT) is a binding site for ATP.

This sequence belongs to the ATPase alpha/beta chains family. F-type ATPases have 2 components, CF(1) - the catalytic core - and CF(0) - the membrane proton channel. CF(1) has five subunits: alpha(3), beta(3), gamma(1), delta(1), epsilon(1). CF(0) has four main subunits: a(1), b(1), b'(1) and c(9-12).

The protein resides in the plastid. It is found in the chloroplast thylakoid membrane. It catalyses the reaction ATP + H2O + 4 H(+)(in) = ADP + phosphate + 5 H(+)(out). In terms of biological role, produces ATP from ADP in the presence of a proton gradient across the membrane. The catalytic sites are hosted primarily by the beta subunits. The sequence is that of ATP synthase subunit beta, chloroplastic from Ipomoea purpurea (Common morning glory).